The sequence spans 227 residues: uncharacterized protein (227 aa).

The next 7 membrane-spanning stretches (helical) occupy residues L25–F45, A49–I69, T80–L100, K111–A131, F144–I164, P165–W185, and A201–L221.

It localises to the cell membrane. This is an uncharacterized protein from Neisseria meningitidis serogroup B (strain ATCC BAA-335 / MC58).